The following is a 593-amino-acid chain: Aspartate--tRNA ligase (593 aa).

Glutamate 180 is an L-aspartate binding site. The interval 204 to 207 (QIFK) is aspartate. Arginine 226 contacts L-aspartate. Residues 226–228 (RDE) and glutamine 235 each bind ATP. An L-aspartate-binding site is contributed by histidine 453. Glutamate 487 serves as a coordination point for ATP. Arginine 494 serves as a coordination point for L-aspartate. 539 to 542 (GLDR) is a binding site for ATP.

The protein belongs to the class-II aminoacyl-tRNA synthetase family. Type 1 subfamily. Homodimer.

The protein resides in the cytoplasm. The catalysed reaction is tRNA(Asp) + L-aspartate + ATP = L-aspartyl-tRNA(Asp) + AMP + diphosphate. Functionally, catalyzes the attachment of L-aspartate to tRNA(Asp) in a two-step reaction: L-aspartate is first activated by ATP to form Asp-AMP and then transferred to the acceptor end of tRNA(Asp). The sequence is that of Aspartate--tRNA ligase from Clostridium botulinum (strain ATCC 19397 / Type A).